A 122-amino-acid chain; its full sequence is S-adenosylmethionine decarboxylase proenzyme (122 aa).

Serine 63 functions as the Schiff-base intermediate with substrate; via pyruvic acid in the catalytic mechanism. Position 63 is a pyruvic acid (Ser); by autocatalysis (serine 63). Catalysis depends on histidine 68, which acts as the Proton acceptor; for processing activity. Cysteine 83 serves as the catalytic Proton donor; for catalytic activity.

The protein belongs to the prokaryotic AdoMetDC family. Type 1 subfamily. As to quaternary structure, heterotetramer of two alpha and two beta chains arranged as a dimer of alpha/beta heterodimers. Requires pyruvate as cofactor. Is synthesized initially as an inactive proenzyme. Formation of the active enzyme involves a self-maturation process in which the active site pyruvoyl group is generated from an internal serine residue via an autocatalytic post-translational modification. Two non-identical subunits are generated from the proenzyme in this reaction, and the pyruvate is formed at the N-terminus of the alpha chain, which is derived from the carboxyl end of the proenzyme. The post-translation cleavage follows an unusual pathway, termed non-hydrolytic serinolysis, in which the side chain hydroxyl group of the serine supplies its oxygen atom to form the C-terminus of the beta chain, while the remainder of the serine residue undergoes an oxidative deamination to produce ammonia and the pyruvoyl group blocking the N-terminus of the alpha chain.

It catalyses the reaction S-adenosyl-L-methionine + H(+) = S-adenosyl 3-(methylsulfanyl)propylamine + CO2. Its pathway is amine and polyamine biosynthesis; S-adenosylmethioninamine biosynthesis; S-adenosylmethioninamine from S-adenosyl-L-methionine: step 1/1. Functionally, catalyzes the decarboxylation of S-adenosylmethionine to S-adenosylmethioninamine (dcAdoMet), the propylamine donor required for the synthesis of the polyamines spermine and spermidine from the diamine putrescine. This chain is S-adenosylmethionine decarboxylase proenzyme, found in Methanococcus maripaludis (strain DSM 14266 / JCM 13030 / NBRC 101832 / S2 / LL).